We begin with the raw amino-acid sequence, 2135 residues long: Plexin-B1 (2135 aa).

An N-terminal signal peptide occupies residues 1–19; it reads MPALGPALLQALWAGWVLT. A Sema domain is found at 20-479; that stretch reads LQPLPPTAFT…TQSTLLKVPV (460 aa). Residues 20–1490 are Extracellular-facing; that stretch reads LQPLPPTAFT…SPGAFPVAAQ (1471 aa). Asparagine 31 carries N-linked (GlcNAc...) asparagine glycosylation. Disulfide bonds link cysteine 79/cysteine 88, cysteine 111/cysteine 119, cysteine 252/cysteine 377, cysteine 268/cysteine 322, cysteine 340/cysteine 364, cysteine 482/cysteine 499, cysteine 488/cysteine 533, cysteine 491/cysteine 508, and cysteine 502/cysteine 514. N-linked (GlcNAc...) asparagine glycosylation occurs at asparagine 334. Asparagine 543 is a glycosylation site (N-linked (GlcNAc...) asparagine). Cysteine 570 and cysteine 588 form a disulfide bridge. Disordered regions lie at residues 671–829 and 849–884; these read MVAS…TTFP and LPEA…PPAP. Residues 681 to 697 are compositionally biased toward pro residues; the sequence is SPDPPARGGPSPSPPTA. Composition is skewed to low complexity over residues 698–710 and 734–754; these read PKAL…DTLP and SPWG…TGSP. IPT/TIG domains are found at residues 1070–1160, 1162–1249, and 1252–1375; these read PLIH…FAYQ, PKVH…FKYT, and PNIT…FSYE. Residues asparagine 1183, asparagine 1253, and asparagine 1330 are each glycosylated (N-linked (GlcNAc...) asparagine). Residues 1491–1511 traverse the membrane as a helical segment; sequence VGLGVGTSLLALGVIIIVLMY. A coiled-coil region spans residues 1507-1539; the sequence is IVLMYRRKSKQALRDYKKVQIQLENLESSVRDR. The Cytoplasmic portion of the chain corresponds to 1512–2135; sequence RRKSKQALRD…AAVENKVTDL (624 aa). The disordered stretch occupies residues 1883 to 1908; that stretch reads PWHLVKPSDEPEPPRPRRGSLRGGER. Over residues 1888–1897 the composition is skewed to basic and acidic residues; that stretch reads KPSDEPEPPR.

The protein belongs to the plexin family. As to quaternary structure, monomer, and heterodimer with PLXNB2 after proteolytic processing. Binds RAC1 that has been activated by GTP binding. Interaction with SEMA4D promotes binding of cytoplasmic ligands. Interacts with PLXNA1. Interacts with ARHGEF11 and ARHGEF12. Interacts with ERBB2. Interacts with MET. Interacts with MST1R. Interacts with RRAS. Interacts with RHOD. Interacts with RND1. Interacts with NRP1 and NRP2. Post-translationally, phosphorylated on tyrosine residues by ERBB2 and MET upon SEMA4D binding. In terms of processing, proteolytic processing favors heterodimerization with PLXNB2 and SEMA4D binding. In terms of tissue distribution, highly expressed in fetal kidney, and at slightly lower levels in fetal brain, lung and liver.

It localises to the cell membrane. Its subcellular location is the secreted. Its function is as follows. Receptor for SEMA4D. Plays a role in GABAergic synapse development. Mediates SEMA4A- and SEMA4D-dependent inhibitory synapse development. Plays a role in RHOA activation and subsequent changes of the actin cytoskeleton. Plays a role in axon guidance, invasive growth and cell migration. The protein is Plexin-B1 (PLXNB1) of Homo sapiens (Human).